Here is a 212-residue protein sequence, read N- to C-terminus: Imidazole glycerol phosphate synthase subunit HisH (212 aa).

The Glutamine amidotransferase type-1 domain maps to 2 to 212 (QTAIIDYGMG…LTMLKNFLNW (211 aa)). Catalysis depends on Cys-85, which acts as the Nucleophile. Residues His-194 and Glu-196 contribute to the active site.

Heterodimer of HisH and HisF.

The protein resides in the cytoplasm. It catalyses the reaction 5-[(5-phospho-1-deoxy-D-ribulos-1-ylimino)methylamino]-1-(5-phospho-beta-D-ribosyl)imidazole-4-carboxamide + L-glutamine = D-erythro-1-(imidazol-4-yl)glycerol 3-phosphate + 5-amino-1-(5-phospho-beta-D-ribosyl)imidazole-4-carboxamide + L-glutamate + H(+). It carries out the reaction L-glutamine + H2O = L-glutamate + NH4(+). It functions in the pathway amino-acid biosynthesis; L-histidine biosynthesis; L-histidine from 5-phospho-alpha-D-ribose 1-diphosphate: step 5/9. IGPS catalyzes the conversion of PRFAR and glutamine to IGP, AICAR and glutamate. The HisH subunit catalyzes the hydrolysis of glutamine to glutamate and ammonia as part of the synthesis of IGP and AICAR. The resulting ammonia molecule is channeled to the active site of HisF. This Neisseria meningitidis serogroup B (strain ATCC BAA-335 / MC58) protein is Imidazole glycerol phosphate synthase subunit HisH (hisH).